The primary structure comprises 360 residues: Lactosylceramide 4-alpha-galactosyltransferase (360 aa).

Residues 1-30 are Cytoplasmic-facing; it reads MGISRSDLEETMSKPPDCLPRMLRGTPRQR. A helical; Signal-anchor for type II membrane protein transmembrane segment spans residues 31 to 51; it reads VFTLFIISFKFTFLVSILIYW. Over 52–360 the chain is Lumenal; sequence HTVGAPKDQR…TTHRAMTMYL (309 aa). Residues 199–201 carry the DXD motif motif; that stretch reads DTD. N-linked (GlcNAc...) asparagine glycans are attached at residues Asn-210 and Asn-316.

The protein belongs to the glycosyltransferase 32 family. Ubiquitous. Highly expressed in kidney, mesenteric lymph node, spleen and brain.

It localises to the golgi apparatus membrane. The catalysed reaction is a beta-D-Gal-(1-&gt;4)-beta-D-Glc-(1&lt;-&gt;1)-Cer(d18:1(4E)) + UDP-alpha-D-galactose = a globoside Gb3Cer (d18:1(4E)) + UDP + H(+). It carries out the reaction a beta-D-Gal-(1&lt;-&gt;1')-ceramide + UDP-alpha-D-galactose = alpha-D-Gal-(1-&gt;4)-beta-D-Gal-(1&lt;-&gt;1')-Cer + UDP + H(+). It participates in glycolipid biosynthesis. Its function is as follows. Catalyzes the transfer of galactose from UDP-alpha-D-galactose to lactosylceramide/beta-D-galactosyl-(1-&gt;4)-beta-D-glucosyl-(1&lt;-&gt;1)-ceramide(d18:1(4E)) to produce globotriaosylceramide/globoside Gb3Cer (d18:1(4E)). Also able to transfer galactose to galactosylceramide/beta-D-Gal-(1&lt;-&gt;1')-Cer. Globoside Gb3Cer is a glycosphingolipid of the globo serie, one of the major types of neutral root structures of glycosphingolipids, that constitute a significant portion of mammalian cell membranes. The chain is Lactosylceramide 4-alpha-galactosyltransferase from Rattus norvegicus (Rat).